Reading from the N-terminus, the 501-residue chain is Type II methyltransferase M.BsuBI (501 aa).

Belongs to the N(4)/N(6)-methyltransferase family.

It catalyses the reaction a 2'-deoxyadenosine in DNA + S-adenosyl-L-methionine = an N(6)-methyl-2'-deoxyadenosine in DNA + S-adenosyl-L-homocysteine + H(+). Its function is as follows. A beta subtype methylase that recognizes the double-stranded sequence 5'-CTGCAG-3', methylates A-5 on both strands, and protects the DNA from cleavage by the BsuBI endonuclease. This is Type II methyltransferase M.BsuBI (hsdBM) from Bacillus subtilis.